Reading from the N-terminus, the 273-residue chain is Putative pyruvate, phosphate dikinase regulatory protein (273 aa).

ADP is bound at residue G153 to T160.

Belongs to the pyruvate, phosphate/water dikinase regulatory protein family. PDRP subfamily.

It carries out the reaction N(tele)-phospho-L-histidyl/L-threonyl-[pyruvate, phosphate dikinase] + ADP = N(tele)-phospho-L-histidyl/O-phospho-L-threonyl-[pyruvate, phosphate dikinase] + AMP + H(+). It catalyses the reaction N(tele)-phospho-L-histidyl/O-phospho-L-threonyl-[pyruvate, phosphate dikinase] + phosphate + H(+) = N(tele)-phospho-L-histidyl/L-threonyl-[pyruvate, phosphate dikinase] + diphosphate. Functionally, bifunctional serine/threonine kinase and phosphorylase involved in the regulation of the pyruvate, phosphate dikinase (PPDK) by catalyzing its phosphorylation/dephosphorylation. The protein is Putative pyruvate, phosphate dikinase regulatory protein of Rhizobium johnstonii (strain DSM 114642 / LMG 32736 / 3841) (Rhizobium leguminosarum bv. viciae).